Here is a 419-residue protein sequence, read N- to C-terminus: Serine hydroxymethyltransferase (419 aa).

Residues leucine 121 and 125-127 (GHL) each bind (6S)-5,6,7,8-tetrahydrofolate. An N6-(pyridoxal phosphate)lysine modification is found at lysine 229.

This sequence belongs to the SHMT family. Homodimer. It depends on pyridoxal 5'-phosphate as a cofactor.

It localises to the cytoplasm. It catalyses the reaction (6R)-5,10-methylene-5,6,7,8-tetrahydrofolate + glycine + H2O = (6S)-5,6,7,8-tetrahydrofolate + L-serine. It participates in one-carbon metabolism; tetrahydrofolate interconversion. It functions in the pathway amino-acid biosynthesis; glycine biosynthesis; glycine from L-serine: step 1/1. In terms of biological role, catalyzes the reversible interconversion of serine and glycine with tetrahydrofolate (THF) serving as the one-carbon carrier. This reaction serves as the major source of one-carbon groups required for the biosynthesis of purines, thymidylate, methionine, and other important biomolecules. Also exhibits THF-independent aldolase activity toward beta-hydroxyamino acids, producing glycine and aldehydes, via a retro-aldol mechanism. This is Serine hydroxymethyltransferase from Streptomyces griseus subsp. griseus (strain JCM 4626 / CBS 651.72 / NBRC 13350 / KCC S-0626 / ISP 5235).